Here is a 285-residue protein sequence, read N- to C-terminus: Diphthine methyl ester synthase (285 aa).

Residues Leu9, Asp84, Gly87, 112-113 (SI), Leu163, Val221, and His246 each bind S-adenosyl-L-methionine.

The protein belongs to the diphthine synthase family.

The protein resides in the cytoplasm. The enzyme catalyses 2-[(3S)-amino-3-carboxypropyl]-L-histidyl-[translation elongation factor 2] + 4 S-adenosyl-L-methionine = diphthine methyl ester-[translation elongation factor 2] + 4 S-adenosyl-L-homocysteine + 3 H(+). It functions in the pathway protein modification; peptidyl-diphthamide biosynthesis. S-adenosyl-L-methionine-dependent methyltransferase that catalyzes four methylations of the modified target histidine residue in translation elongation factor 2 (EF-2), to form an intermediate called diphthine methyl ester. The four successive methylation reactions represent the second step of diphthamide biosynthesis. In Emericella nidulans (strain FGSC A4 / ATCC 38163 / CBS 112.46 / NRRL 194 / M139) (Aspergillus nidulans), this protein is Diphthine methyl ester synthase (dph5).